Here is a 74-residue protein sequence, read N- to C-terminus: Large ribosomal subunit protein bL31 (74 aa).

The protein belongs to the bacterial ribosomal protein bL31 family. Type A subfamily. In terms of assembly, part of the 50S ribosomal subunit.

Functionally, binds the 23S rRNA. This Xanthobacter autotrophicus (strain ATCC BAA-1158 / Py2) protein is Large ribosomal subunit protein bL31.